The following is a 154-amino-acid chain: Cytochrome c-type biogenesis protein CcmE (154 aa).

Over 1 to 8 (MTPQRKRR) the chain is Cytoplasmic. A helical; Signal-anchor for type II membrane protein membrane pass occupies residues 9 to 29 (LVMLAALAGGVGVAVALALAA). The Periplasmic portion of the chain corresponds to 30 to 154 (LQQNINLFYS…GGTPAAEPQP (125 aa)). Positions 124 and 128 each coordinate heme. Positions 130 to 154 (PPEAAHALKQGAATSGGTPAAEPQP) are disordered.

It belongs to the CcmE/CycJ family.

The protein localises to the cell inner membrane. Its function is as follows. Heme chaperone required for the biogenesis of c-type cytochromes. Transiently binds heme delivered by CcmC and transfers the heme to apo-cytochromes in a process facilitated by CcmF and CcmH. This is Cytochrome c-type biogenesis protein CcmE from Bordetella petrii (strain ATCC BAA-461 / DSM 12804 / CCUG 43448).